The primary structure comprises 470 residues: 6-phospho-beta-galactosidase (470 aa).

D-galactose 6-phosphate-binding residues include glutamine 19, histidine 116, asparagine 159, glutamate 160, and asparagine 297. Glutamate 160 serves as the catalytic Proton donor. The active-site Nucleophile is glutamate 375. Positions 430, 431, 437, and 439 each coordinate D-galactose 6-phosphate.

Belongs to the glycosyl hydrolase 1 family.

The catalysed reaction is a 6-phospho-beta-D-galactoside + H2O = D-galactose 6-phosphate + an alcohol. It functions in the pathway carbohydrate metabolism; lactose degradation; D-galactose 6-phosphate and beta-D-glucose from lactose 6-phosphate: step 1/1. The polypeptide is 6-phospho-beta-galactosidase (Staphylococcus epidermidis (strain ATCC 35984 / DSM 28319 / BCRC 17069 / CCUG 31568 / BM 3577 / RP62A)).